Reading from the N-terminus, the 360-residue chain is Phospho-N-acetylmuramoyl-pentapeptide-transferase (360 aa).

10 consecutive transmembrane segments (helical) span residues 26–46, 70–90, 94–114, 136–156, 164–184, 199–219, 236–256, 263–283, 289–309, and 339–359; these read GVLATLTALVLSLFIGPFFIA, GTPTMGGALILLVVILTTLLW, GNPLVWVAVLTTLAFGAIGFV, LQSLVAFAAGGVLYALASNPV, FIPHVLIPMGAGFIVFSYFVI, GLAIVPTVMVAGALGVFAYVS, SGQMLIFCGALVGAGLGFLWF, VFMGDTGALALGAALAIVAIV, VLFIMGGVFVVETLSVIIQVV, and AVRFWIITVILVLVGLSSLKI.

Belongs to the glycosyltransferase 4 family. MraY subfamily. It depends on Mg(2+) as a cofactor.

It localises to the cell inner membrane. It carries out the reaction UDP-N-acetyl-alpha-D-muramoyl-L-alanyl-gamma-D-glutamyl-meso-2,6-diaminopimeloyl-D-alanyl-D-alanine + di-trans,octa-cis-undecaprenyl phosphate = di-trans,octa-cis-undecaprenyl diphospho-N-acetyl-alpha-D-muramoyl-L-alanyl-D-glutamyl-meso-2,6-diaminopimeloyl-D-alanyl-D-alanine + UMP. It participates in cell wall biogenesis; peptidoglycan biosynthesis. Catalyzes the initial step of the lipid cycle reactions in the biosynthesis of the cell wall peptidoglycan: transfers peptidoglycan precursor phospho-MurNAc-pentapeptide from UDP-MurNAc-pentapeptide onto the lipid carrier undecaprenyl phosphate, yielding undecaprenyl-pyrophosphoryl-MurNAc-pentapeptide, known as lipid I. This is Phospho-N-acetylmuramoyl-pentapeptide-transferase from Acidithiobacillus ferrooxidans (strain ATCC 23270 / DSM 14882 / CIP 104768 / NCIMB 8455) (Ferrobacillus ferrooxidans (strain ATCC 23270)).